The sequence spans 632 residues: 1-deoxy-D-xylulose-5-phosphate synthase (632 aa).

Thiamine diphosphate-binding positions include His79 and 120-122 (GHA). Position 151 (Asp151) interacts with Mg(2+). Residues 152–153 (GS), Asn180, Phe292, and Glu376 contribute to the thiamine diphosphate site. Mg(2+) is bound at residue Asn180.

Belongs to the transketolase family. DXPS subfamily. Homodimer. Requires Mg(2+) as cofactor. Thiamine diphosphate serves as cofactor.

It catalyses the reaction D-glyceraldehyde 3-phosphate + pyruvate + H(+) = 1-deoxy-D-xylulose 5-phosphate + CO2. It participates in metabolic intermediate biosynthesis; 1-deoxy-D-xylulose 5-phosphate biosynthesis; 1-deoxy-D-xylulose 5-phosphate from D-glyceraldehyde 3-phosphate and pyruvate: step 1/1. In terms of biological role, catalyzes the acyloin condensation reaction between C atoms 2 and 3 of pyruvate and glyceraldehyde 3-phosphate to yield 1-deoxy-D-xylulose-5-phosphate (DXP). The chain is 1-deoxy-D-xylulose-5-phosphate synthase from Azobacteroides pseudotrichonymphae genomovar. CFP2.